The sequence spans 496 residues: Fibronectin type III and SPRY domain-containing protein 1 (496 aa).

A coiled-coil region spans residues 4 to 99 (QREALRKIIK…ALESSEELLE (96 aa)). The region spanning 105-162 (LQAMDSEDFPQAAKQIKDGVTMAPAFRLSLKAKVSDNMSHLMVDFAQERQMLQALKFL) is the COS domain. Residues 164–268 (VPSAPVIDLA…EPVTLETPAF (105 aa)) enclose the Fibronectin type-III domain. The B30.2/SPRY domain occupies 268-477 (FMFRLDASTS…VTTGLQVPSA (210 aa)). The interval 301–336 (KAREKDGKGRTASPINSPARGTPSPKRMPSGRGGRD) is disordered. An omega-N-methylarginine mark is found at Arg-310 and Arg-320.

In terms of assembly, oligomerization is required for binding to microtubules. Highly expressed in brain tissues, including cerebellum, cerebral cortex, medulla, occipital pole, frontal lobe, temporal lobe and putamen. Lower expression in spinal cord.

The protein resides in the cytoplasm. The protein localises to the cytoskeleton. It localises to the microtubule organizing center. It is found in the centrosome. Its subcellular location is the nucleus. The protein resides in the cleavage furrow. Functionally, may be involved in microtubule organization and stabilization. The chain is Fibronectin type III and SPRY domain-containing protein 1 (FSD1) from Homo sapiens (Human).